Reading from the N-terminus, the 161-residue chain is Large ribosomal subunit protein uL16 (161 aa).

Residues 140-161 form a disordered region; that stretch reads LNKGNYKPAKTPVTADDSESSS.

This sequence belongs to the universal ribosomal protein uL16 family. Part of the 50S ribosomal subunit.

Binds 23S rRNA and is also seen to make contacts with the A and possibly P site tRNAs. In Prochlorococcus marinus (strain NATL2A), this protein is Large ribosomal subunit protein uL16.